The primary structure comprises 437 residues: UDP-glucose 6-dehydrogenase (437 aa).

6 residues coordinate NAD(+): valine 11, aspartate 30, lysine 35, threonine 86, threonine 122, and glutamate 155. Residues 151-155 (EFLRE), lysine 209, asparagine 213, 254-258 (FLHAG), and glycine 262 contribute to the substrate site. The active-site Nucleophile is the cysteine 265. Residue lysine 268 coordinates NAD(+). Lysine 326 provides a ligand contact to substrate. Arginine 333 contributes to the NAD(+) binding site.

This sequence belongs to the UDP-glucose/GDP-mannose dehydrogenase family.

The catalysed reaction is UDP-alpha-D-glucose + 2 NAD(+) + H2O = UDP-alpha-D-glucuronate + 2 NADH + 3 H(+). It functions in the pathway nucleotide-sugar biosynthesis; UDP-alpha-D-glucuronate biosynthesis; UDP-alpha-D-glucuronate from UDP-alpha-D-glucose: step 1/1. It participates in capsule biogenesis; capsule polysaccharide biosynthesis. This chain is UDP-glucose 6-dehydrogenase, found in Rhizobium meliloti (strain 1021) (Ensifer meliloti).